We begin with the raw amino-acid sequence, 93 residues long: MSQFSVLNVGFGNIVLVSKIVSIIHSDSASAKRIRNEAKSNNSLIDATQGKKTRSIIVTDSNHLILSNLRVESLAKRIESSDNSIASEEEDLD.

It belongs to the RemA family.

The protein is Putative regulatory protein LBL_1834 of Leptospira borgpetersenii serovar Hardjo-bovis (strain L550).